Here is a 300-residue protein sequence, read N- to C-terminus: Ribosomal protein bS6--L-glutamate ligase (300 aa).

One can recognise an ATP-grasp domain in the interval 104-287 (MQLLARQGID…IAGKMIRWIE (184 aa)). Residues lysine 141, 178-179 (EY), aspartate 187, and 211-213 (RSN) each bind ATP. Residues aspartate 248, glutamate 260, and asparagine 262 each coordinate Mg(2+). The Mn(2+) site is built by aspartate 248, glutamate 260, and asparagine 262.

It belongs to the RimK family. Requires Mg(2+) as cofactor. Mn(2+) is required as a cofactor.

In terms of biological role, an L-glutamate ligase that catalyzes the ATP-dependent post-translational addition of glutamate residues to the C-terminus of ribosomal protein bS6 (RpsF). Is also able to catalyze the synthesis of poly-alpha-glutamate in vitro, via ATP hydrolysis from unprotected glutamate as substrate. The number of glutamate residues added to either RpsF or to poly-alpha-glutamate changes with pH. The sequence is that of Ribosomal protein bS6--L-glutamate ligase from Shigella boydii serotype 18 (strain CDC 3083-94 / BS512).